The sequence spans 354 residues: Protein RecA (354 aa).

An ATP-binding site is contributed by 65-72; it reads GPESSGKT.

The protein belongs to the RecA family.

The protein localises to the cytoplasm. Its function is as follows. Can catalyze the hydrolysis of ATP in the presence of single-stranded DNA, the ATP-dependent uptake of single-stranded DNA by duplex DNA, and the ATP-dependent hybridization of homologous single-stranded DNAs. It interacts with LexA causing its activation and leading to its autocatalytic cleavage. The sequence is that of Protein RecA from Pseudomonas savastanoi pv. phaseolicola (strain 1448A / Race 6) (Pseudomonas syringae pv. phaseolicola (strain 1448A / Race 6)).